The sequence spans 391 residues: MTFADRLPRRLMLLGSGELGKEFAIAAQRLGNTVIAVDRYAHAPAMQVADASAVISMLDGEALEAVVQEFQPDLIIPEIEAIRTEKLQEFEDRGLTVIPTARATHFTMNRDRIRDLAAQQLGLRTARYAYASCFEELQTVAAAIGYPNVIKPVMSSSGKGQSIIQQPDQLQAAWDYAIAGSRGDSQKVILEEFIPFELEITLLTIRQWQGPTLFCPPIGHRQERGDYQESWQPAPLRPDLLAQAQAIAAQVTEALGGAGLFGVEFFVTPDEVIFSELSPRPHDTGMVTLISQNLNEFELHLRAVLGLPIPAIELLGPSASRVILAEDSGDRPSYAGVAAALQEPWVDLRLFGKPDMRPQRRMGVALARDESVEAARAKADRAASQVTIQPS.

N(1)-(5-phospho-beta-D-ribosyl)glycinamide is bound by residues 18–19 and Glu-78; that span reads EL. ATP-binding positions include Arg-110, Lys-151, 156 to 161, 191 to 194, and Glu-199; these read SSGKGQ and EEFI. In terms of domain architecture, ATP-grasp spans 115–305; sequence DLAAQQLGLR…EFELHLRAVL (191 aa). Glu-264 and Glu-276 together coordinate Mg(2+). N(1)-(5-phospho-beta-D-ribosyl)glycinamide is bound by residues Asp-283, Lys-353, and 360–361; that span reads RR.

It belongs to the PurK/PurT family. As to quaternary structure, homodimer.

It catalyses the reaction N(1)-(5-phospho-beta-D-ribosyl)glycinamide + formate + ATP = N(2)-formyl-N(1)-(5-phospho-beta-D-ribosyl)glycinamide + ADP + phosphate + H(+). It functions in the pathway purine metabolism; IMP biosynthesis via de novo pathway; N(2)-formyl-N(1)-(5-phospho-D-ribosyl)glycinamide from N(1)-(5-phospho-D-ribosyl)glycinamide (formate route): step 1/1. Its function is as follows. Involved in the de novo purine biosynthesis. Catalyzes the transfer of formate to 5-phospho-ribosyl-glycinamide (GAR), producing 5-phospho-ribosyl-N-formylglycinamide (FGAR). Formate is provided by PurU via hydrolysis of 10-formyl-tetrahydrofolate. The chain is Formate-dependent phosphoribosylglycinamide formyltransferase from Synechococcus elongatus (strain ATCC 33912 / PCC 7942 / FACHB-805) (Anacystis nidulans R2).